The following is a 587-amino-acid chain: Probable intramembrane protease YKL100C (587 aa).

Residues 1–85 (MDKYLNSFVD…HSLVFNYATL (85 aa)) are Lumenal-facing. A helical transmembrane segment spans residues 86–106 (VLIASALVVIGSFTSISSIPF). Residues 107 to 156 (TALPPTREHSLFDPTDFDVDHDCHVIYRENDEDKKKKKKSKRFFDMMDEK) lie on the Cytoplasmic side of the membrane. Residues 157 to 177 (HAIILPLTSGCTLLALYFVIK) form a helical membrane-spanning segment. Residues 178-192 (KLHLNWLKYVVKILN) are Lumenal-facing. Residues 193 to 213 (FNITLLNIPAGTFVYSYFLNS) traverse the membrane as a helical segment. Topologically, residues 214–303 (LFRNLSHLAS…KSKRQISNMY (90 aa)) are cytoplasmic. The helical transmembrane segment at 304 to 324 (LNSALIVSFVLSIVSTVYFYL) threads the bilayer. The Lumenal segment spans residues 325–328 (SPND). The chain crosses the membrane as a helical span at residues 329–349 (WLISNAVSMNMAIWSIAQLKL). Residues 350-351 (KN) are Cytoplasmic-facing. Residues 352–372 (LKSGALILIALFFYDICFVFG) traverse the membrane as a helical segment. D366 is a catalytic residue. Topologically, residues 373–401 (TDVMVTVATNLDIPVKLSLPVKFNTAQNN) are lumenal. A helical transmembrane segment spans residues 402–422 (FNFSILGLGDIALPGMFIAMC). D411 is an active-site residue. Topologically, residues 423-450 (YKYDIWKWHLDHDDTEFHFLNWSYVGKY) are cytoplasmic. Residues 451 to 471 (FITAMVSYVASLVSAMVSLSI) traverse the membrane as a helical segment. Topologically, residues 472–475 (FNTA) are lumenal. The chain crosses the membrane as a helical span at residues 476–496 (QPALLYIVPSLLISTILVACW). Positions 477-479 (PAL) match the PAL motif. Over 497 to 587 (NKDFKQFWNF…EEDLLDDESS (91 aa)) the chain is Cytoplasmic. Residues 561 to 587 (EFVQEEDLSDSSEEELSEEDLLDDESS) are disordered.

This sequence belongs to the peptidase A22B family.

It localises to the membrane. The protein resides in the endoplasmic reticulum membrane. Its function is as follows. May act as intramembrane protease. This is Probable intramembrane protease YKL100C from Saccharomyces cerevisiae (strain ATCC 204508 / S288c) (Baker's yeast).